The primary structure comprises 68 residues: ATP synthase F(0) complex subunit 8 (68 aa).

A helical transmembrane segment spans residues 8 to 24 (TWSITIVSMIITLFIMF). Lys54 carries the post-translational modification N6-acetyllysine; alternate. N6-succinyllysine; alternate is present on Lys54. N6-acetyllysine is present on Lys57.

This sequence belongs to the ATPase protein 8 family. Component of the ATP synthase complex composed at least of ATP5F1A/subunit alpha, ATP5F1B/subunit beta, ATP5MC1/subunit c (homooctomer), MT-ATP6/subunit a, MT-ATP8/subunit 8, ATP5ME/subunit e, ATP5MF/subunit f, ATP5MG/subunit g, ATP5MK/subunit k, ATP5MJ/subunit j, ATP5F1C/subunit gamma, ATP5F1D/subunit delta, ATP5F1E/subunit epsilon, ATP5PF/subunit F6, ATP5PB/subunit b, ATP5PD/subunit d, ATP5PO/subunit OSCP. ATP synthase complex consists of a soluble F(1) head domain (subunits alpha(3) and beta(3)) - the catalytic core - and a membrane F(0) domain - the membrane proton channel (subunits c, a, 8, e, f, g, k and j). These two domains are linked by a central stalk (subunits gamma, delta, and epsilon) rotating inside the F1 region and a stationary peripheral stalk (subunits F6, b, d, and OSCP). Interacts with PRICKLE3.

The protein resides in the mitochondrion membrane. Functionally, subunit 8, of the mitochondrial membrane ATP synthase complex (F(1)F(0) ATP synthase or Complex V) that produces ATP from ADP in the presence of a proton gradient across the membrane which is generated by electron transport complexes of the respiratory chain. ATP synthase complex consist of a soluble F(1) head domain - the catalytic core - and a membrane F(1) domain - the membrane proton channel. These two domains are linked by a central stalk rotating inside the F(1) region and a stationary peripheral stalk. During catalysis, ATP synthesis in the catalytic domain of F(1) is coupled via a rotary mechanism of the central stalk subunits to proton translocation. In vivo, can only synthesize ATP although its ATP hydrolase activity can be activated artificially in vitro. Part of the complex F(0) domain. This is ATP synthase F(0) complex subunit 8 from Ceratotherium simum (White rhinoceros).